Reading from the N-terminus, the 627-residue chain is Neuronal acetylcholine receptor subunit alpha-4 (627 aa).

Positions methionine 1 to proline 31 are cleaved as a signal peptide. At valine 32–leucine 244 the chain is on the extracellular side. A glycan (N-linked (GlcNAc...) asparagine) is linked at asparagine 59. The Ca(2+) site is built by valine 78 and glutamate 80. Residues asparagine 109 and asparagine 176 are each glycosylated (N-linked (GlcNAc...) asparagine). 2 disulfides stabilise this stretch: cysteine 163–cysteine 177 and cysteine 227–cysteine 228. A helical membrane pass occupies residues proline 245 to leucine 269. Cysteine 273 carries S-palmitoyl cysteine lipidation. 2 helical membrane-spanning segments follow: residues valine 277–threonine 295 and tyrosine 311–valine 332. The Cytoplasmic segment spans residues histidine 333 to arginine 600. Residues proline 384–glycine 399 are compositionally biased toward low complexity. Residues proline 384–leucine 463 are disordered. Serine 427 is modified (phosphoserine). Pro residues predominate over residues serine 444–threonine 458. Phosphoserine is present on serine 541. Residues isoleucine 601–leucine 619 traverse the membrane as a helical segment.

This sequence belongs to the ligand-gated ion channel (TC 1.A.9) family. Acetylcholine receptor (TC 1.A.9.1) subfamily. Alpha-4/CHRNA4 sub-subfamily. As to quaternary structure, neuronal AChR is composed of two different types of subunits: alpha and beta. CHRNA4 forms heteropentameric neuronal acetylcholine receptors with CHRNB2 and CHRNB4, as well as CHRNA5 and CHRNB3 as accesory subunits. Found in two major stoichiometric forms, LS (low agonist sensitivity): (CHRNA4)3:(CHRNB2)2 and HS (high agonist sensitivity): (CHRNA4)2:(CHRNB2)3, the two stoichiometric forms differ in their unitary conductance, calcium permeability, ACh sensitivity and potentiation by divalent cation. Cells produce predominantly an (CHRNA4)3:(CHRNB2)2 nAChR. The (CHRNA4)2:(CHRNB2)3 expression is selectively up-regulated by nicotine and has lower single channel conductance and calcium permeability. In the striatum, also forms CHRNA4:CHRNA6:CHRNB2 complexes. Also found in the stoichiometric form: (CHRNA4:CHRNB2)2:CHRNB3. Interacts with RIC3; which is required for proper folding and assembly. Interacts with LYPD6.

It localises to the synaptic cell membrane. Its subcellular location is the cell membrane. It catalyses the reaction Ca(2+)(in) = Ca(2+)(out). It carries out the reaction K(+)(in) = K(+)(out). The catalysed reaction is Na(+)(in) = Na(+)(out). Its activity is regulated as follows. Activated by a myriad of ligands such as acetylcholine, cytisine, nicotine, choline and epibatidine. Channel potentiation by calcium is stoichiometry-selective, CHRNA4:CHRNB2 nACh receptor is achieved by calcium association with topographically distinct sites framed by anionic residues within the CHRNA4 subunit and between the CHRNA4 and CHRNB2 subunits. nAChR activity is inhibited by the antagonist alpha-conotoxins BuIA, PnIA, GID and MII, small disulfide-constrained peptides from cone snails. Component of neuronal acetylcholine receptors (nAChRs) that function as pentameric, ligand-gated cation channels with high calcium permeability among other activities. nAChRs are excitatory neurotrasnmitter receptors formed by a collection of nAChR subunits known to mediate synaptic transmission in the nervous system and the neuromuscular junction. Each nAchR subunit confers differential attributes to channel properties, including activation, deactivation and desensitization kinetics, pH sensitivity, cation permeability, and binding to allosteric modulators. CHRNA4 forms heteropentameric neuronal acetylcholine receptors with CHRNB2 and CHRNB4, as well as CHRNA5 and CHRNB3 as accesory subunits. Is the most abundant nAChR subtype expressed in the central nervous system. Found in two major stoichiometric forms,(CHRNA4)3:(CHRNB2)2 and (CHRNA4)2:(CHRNB2)3, the two stoichiometric forms differ in their unitary conductance, calcium permeability, ACh sensitivity and potentiation by divalent cation. Involved in the modulation of calcium-dependent signaling pathways, influences the release of neurotransmitters, including dopamine, glutamate and GABA. The chain is Neuronal acetylcholine receptor subunit alpha-4 (CHRNA4) from Mustela putorius furo (European domestic ferret).